We begin with the raw amino-acid sequence, 476 residues long: MTEAVERLTKKSEDSSRWYLELVRMAKLADYGPVRGTFAIRPYGFAIWERIQADLDARFKATGHVNAYFPLLIPESYLTKEAEHVEGFAPECAWVTVGGDDELEERLAIRPTSESIICDFYRKWIHSYRDLPVLINQWCNVLRWEMVTRPFLRTAEFLWQEGHTVHATAEEAREEALRMLNVYRDCFYEVLAIPVLTGMKSPSERFAGAVETFTCEGLMGDGRALQAATSHDLGQNFARAFDITFLDENQERVHPYQTSWGFSTRTIGALILVHGDDRGLRLPPKLAPTQAVVVPIWRGKNKGEVRREAEALHRELAEAGLRAEADLDEEHSPGWKFNEHELRGVPVRVELGPKDIEKGQAVLVRRDTGEKEFVGRGAAARRLVELMDEIQQNMLRQAEAFRDENTRRAETYEEFKEIIEEKRGFVVAPWDGTEETEQRIKEETKATIRLLPFEREEGKDLVSGRPGKTAVFARAY.

It belongs to the class-II aminoacyl-tRNA synthetase family. ProS type 3 subfamily. In terms of assembly, homodimer.

It localises to the cytoplasm. The catalysed reaction is tRNA(Pro) + L-proline + ATP = L-prolyl-tRNA(Pro) + AMP + diphosphate. In terms of biological role, catalyzes the attachment of proline to tRNA(Pro) in a two-step reaction: proline is first activated by ATP to form Pro-AMP and then transferred to the acceptor end of tRNA(Pro). This chain is Proline--tRNA ligase, found in Rubrobacter xylanophilus (strain DSM 9941 / JCM 11954 / NBRC 16129 / PRD-1).